The primary structure comprises 150 residues: Ribonuclease K6 (150 aa).

Positions 1–23 are cleaved as a signal peptide; sequence MVLCFPLLLLLLVLWGPVCLLHA. The active-site Proton acceptor is the histidine 38. 4 disulfides stabilise this stretch: cysteine 46–cysteine 104, cysteine 60–cysteine 114, cysteine 78–cysteine 129, and cysteine 85–cysteine 92. Asparagine 55 carries N-linked (GlcNAc...) asparagine glycosylation. Residues 61 to 65 and lysine 86 contribute to the substrate site; that span reads KHQNT. Residue asparagine 100 is glycosylated (N-linked (GlcNAc...) asparagine). Residue arginine 105 coordinates substrate. Histidine 145 acts as the Proton donor in catalysis.

Belongs to the pancreatic ribonuclease family. In terms of assembly, interacts (via N-terminus) with bacterial lipopolysaccharide (LPS).

The protein localises to the secreted. It is found in the lysosome. Its subcellular location is the cytoplasmic granule. Functionally, ribonuclease which shows a preference for the pyrimidines uridine and cytosine. Has potent antibacterial activity against a range of Gram-positive and Gram-negative bacteria, including P.aeruginosa, A.baumanii, M.luteus, S.aureus, E.faecalis, E.faecium, S.saprophyticus and E.coli. Causes loss of bacterial membrane integrity, and also promotes agglutination of Gram-negative bacteria. Probably contributes to urinary tract sterility. Bactericidal activity is independent of RNase activity. This is Ribonuclease K6 (RNASE6) from Macaca mulatta (Rhesus macaque).